Consider the following 362-residue polypeptide: Dihydroorotate dehydrogenase (quinone) (362 aa).

Residues 62–66 (AGYDK) and Thr86 contribute to the FMN site. A substrate-binding site is contributed by Lys66. 111–115 (NRLGF) contributes to the substrate binding site. Residues Asn139 and Asn170 each contribute to the FMN site. Asn170 lines the substrate pocket. Ser173 acts as the Nucleophile in catalysis. Asn175 contributes to the substrate binding site. Lys215 and Ser243 together coordinate FMN. Residue 244–245 (NT) participates in substrate binding. FMN-binding positions include Gly266, Gly295, and 316 to 317 (YS).

It belongs to the dihydroorotate dehydrogenase family. Type 2 subfamily. In terms of assembly, monomer. It depends on FMN as a cofactor.

It localises to the cell membrane. The catalysed reaction is (S)-dihydroorotate + a quinone = orotate + a quinol. The protein operates within pyrimidine metabolism; UMP biosynthesis via de novo pathway; orotate from (S)-dihydroorotate (quinone route): step 1/1. In terms of biological role, catalyzes the conversion of dihydroorotate to orotate with quinone as electron acceptor. The protein is Dihydroorotate dehydrogenase (quinone) of Rhizobium leguminosarum bv. trifolii (strain WSM2304).